The following is a 559-amino-acid chain: Cation/calcium exchanger 2 (559 aa).

13 consecutive transmembrane segments (helical) span residues 10–30 (FGYL…GFFT), 86–106 (GFPI…FYLL), 131–151 (VAGV…ASLV), 167–187 (TVVG…SISL), 203–223 (ICFF…GKIN), 224–244 (FWGA…VVLS), 331–351 (WSKP…SFLW), 362–382 (AGVV…IAGA), 393–413 (WLLP…YISA), 416–436 (LVAL…ILGL), 480–500 (FALG…SIVI), 506–526 (LLES…VLFS), and 531–551 (LGGV…SLRI).

It belongs to the Ca(2+):cation antiporter (CaCA) (TC 2.A.19) family. Cation/calcium exchanger (CCX) subfamily.

It is found in the membrane. Membrane-localized H(+)-dependent K(+) and Na(+) transporter. This chain is Cation/calcium exchanger 2 (CCX2), found in Arabidopsis thaliana (Mouse-ear cress).